The primary structure comprises 279 residues: Small ribosomal subunit protein uS2 (279 aa).

The segment at L255–S279 is disordered.

It belongs to the universal ribosomal protein uS2 family.

In Mycolicibacterium gilvum (strain PYR-GCK) (Mycobacterium gilvum (strain PYR-GCK)), this protein is Small ribosomal subunit protein uS2.